A 907-amino-acid polypeptide reads, in one-letter code: Chloride channel protein 2 (907 aa).

The Cytoplasmic portion of the chain corresponds to 1 to 93 (MAAATAAAAT…RCHKFLVSRV (93 aa)). Residues 22–40 (QYEQTLMYGRYTQELGAFA) are essential for channel gating by both voltage and cell volume. Thr-26 bears the Phosphothreonine mark. A modulates channel gating by both voltage and cell volume region spans residues 42–55 (EEAARIRLGGPEPW). 2 helical membrane passes run 94–127 (GEDW…AQQW) and 136–161 (ILLQ…TQIL). The short motif at 167 to 171 (GSGIP) is the Selectivity filter part_1 element. The helical intramembrane region spans 170–177 (IPEMKTIL). 2 consecutive transmembrane segments (helical) span residues 186–204 (LTLK…ALGS) and 211–229 (EGPF…SKFL). Residues 209–213 (GKEGP) carry the Selectivity filter part_2 motif. 2 consecutive intramembrane regions (helical) follow at residues 245–257 (MLAA…VGCC) and 261–269 (PIGGVLFSI). The next 5 helical transmembrane spans lie at 281 to 301 (YWRG…LAVW), 327 to 355 (LPAF…VQVM), 364 to 383 (FLMK…ISTL), 435 to 455 (ANVF…SALA), and 463 to 486 (GAFM…MAAW). Positions 463-467 (GAFMP) match the Selectivity filter part_3 motif. The segment at residues 503-517 (GGYAVVGAAALAGAV) is an intramembrane region (helical). The segment at residues 518–519 (TH) is an intramembrane region (note=Loop between two helices). An intramembrane region (helical) is located at residues 520–531 (TVSTAVIVFELT). An intramembrane region (note=Loop between two helices) is located at residues 532 to 536 (GQIAH). Residues 537–554 (ILPVMIAVILANAVAQSL) form a helical membrane-spanning segment. Topologically, residues 555–907 (QPSLYDSIIR…TPSDSDDKCQ (353 aa)) are cytoplasmic. In terms of domain architecture, CBS 1 spans 590–648 (MVRDVPHVALSCTFRDLRLALHRTKGRMLALVESPESMILLGSIERSQVVALLGAQLSP). Basic residues predominate over residues 650–660 (RRRQHMQKLRK). Positions 650–720 (RRRQHMQKLR…NATSLQEGTT (71 aa)) are disordered. Low complexity predominate over residues 664-678 (SPPSDQESPPSSETS). A compositionally biased stretch (basic residues) spans 696-705 (QTHKPLKPAL). A compositionally biased stretch (polar residues) spans 710-720 (SNATSLQEGTT). The residue at position 767 (Ser-767) is a Phosphoserine. The region spanning 799 to 859 (IDPAPFQLVE…GSVTAQGVKV (61 aa)) is the CBS 2 domain. A Basolateral membrane sorting motif is present at residues 821–822 (LL). Residues 865-907 (SFRDSATSSSDTETTEVHALWGPRSRHGLPREGTPSDSDDKCQ) form a disordered region.

The protein belongs to the chloride channel (TC 2.A.49) family. ClC-2/CLCN2 subfamily. Homodimer. Interacts with auxiliary subunit HEPACAM. In terms of processing, phosphorylated. Activated by dephosphorylation. Ubiquitously expressed. Expressed in neurons and glial cells (at protein level).

The protein localises to the cell membrane. It is found in the basolateral cell membrane. Its subcellular location is the cell projection. It localises to the dendritic spine membrane. The protein resides in the axon. It catalyses the reaction chloride(in) = chloride(out). It carries out the reaction thiocyanate(in) = thiocyanate(out). The enzyme catalyses bromide(in) = bromide(out). The catalysed reaction is nitrate(in) = nitrate(out). It catalyses the reaction iodide(out) = iodide(in). With respect to regulation, common gate kinetics are down-regulated by intracellular ATP. Inhibited by AK-42, a derivative of meclofenamate. Inhibited by Cd(2+). Inhibited by Zn(2+) and PKC activation. Inhibited at acidic pH. CCLN2:HEPACAM channel conductance is up-regulated upon hypo-osmolarity. Its function is as follows. Voltage-gated and osmosensitive chloride channel. Forms a homodimeric channel where each subunit has its own ion conduction pathway. Conducts double-barreled currents controlled by two types of gates, two fast glutamate gates that control each subunit independently and a slow common gate that opens and shuts off both subunits simultaneously. Displays inward rectification currents activated upon membrane hyperpolarization and extracellular hypotonicity. Contributes to chloride conductance involved in neuron excitability. In hippocampal neurons, generates a significant part of resting membrane conductance and provides an additional chloride efflux pathway to prevent chloride accumulation in dendrites upon GABA receptor activation. In glia, associates with the auxiliary subunit HEPACAM/GlialCAM at astrocytic processes and myelinated fiber tracts where it may regulate transcellular chloride flux buffering extracellular chloride and potassium concentrations. Regulates aldosterone production in adrenal glands. The opening of CLCN2 channels at hyperpolarized membrane potentials in the glomerulosa causes cell membrane depolarization, activation of voltage-gated calcium channels and increased expression of aldosterone synthase, the rate-limiting enzyme for aldosterone biosynthesis. Contributes to chloride conductance in retinal pigment epithelium involved in phagocytosis of shed photoreceptor outer segments and photoreceptor renewal. Conducts chloride currents at the basolateral membrane of epithelial cells with a role in chloride reabsorption rather than secretion. Permeable to small monovalent anions with chloride &gt; thiocyanate &gt; bromide &gt; nitrate &gt; iodide ion selectivity. This Rattus norvegicus (Rat) protein is Chloride channel protein 2 (Clcn2).